The sequence spans 232 residues: MVSLEDAVIARLESHGERFEVLVDPDLAAEFRREDSDVSVEDVLAVQEVFRDARKGDKASEEAMRKVFETADPLEVTPVILRRGTIQLTAEQRRQMIEDKRLKIINKIAREAINPQNGLPHPPKRIEKAMEEARVHVDPFKTVDEQVNIVLKAIRTKIPIKFEKVRVAIKIPGERAGSAYGVISNFGKITNEEWQNDGSWIAVVEIPGGLQDSFYQKLSELTGGNVETRLIK.

Belongs to the SDO1/SBDS family.

This is Ribosome maturation protein SDO1 homolog from Methanothermobacter thermautotrophicus (strain ATCC 29096 / DSM 1053 / JCM 10044 / NBRC 100330 / Delta H) (Methanobacterium thermoautotrophicum).